A 1758-amino-acid polypeptide reads, in one-letter code: RanBP2-like and GRIP domain-containing protein 3 (1758 aa).

Ser21 carries the post-translational modification Phosphoserine. One copy of the TPR 1 repeat lies at 60-93 (PRAHRFLGLLYELEENTEKAVECYRRSVELNPTQ). The stretch at 176–229 (RSTKRLKDAVARCHEAERNIALRSSLEWNSCVVQTLKEYLESLQCLESDKSDWR) forms a coiled coil. A TPR 2 repeat occupies 584–617 (QKMGSGLNSFYDQREYIGRSVHYWKKVLPLLKII). Positions 761–805 (GPLYKNGSLRNADSEIKHSTPSPTKYSLSPSKSYKYSPKTPPRWA) are disordered. The segment covering 779–798 (STPSPTKYSLSPSKSYKYSP) has biased composition (low complexity). Residues 805 to 837 (AEDQNSLLKMIRQEVKAIKEEMQELKLNSSKSA) are a coiled coil. In terms of domain architecture, RanBD1 1 spans 1037-1173 (HFEPVVQMPE…FEECQRLLLD (137 aa)). 3 disordered regions span residues 1216–1248 (VAEE…PTLE), 1307–1335 (AKLN…GQYF), and 1581–1622 (NNSE…KNLS). Positions 1236–1245 (IKPNAENTGP) are enriched in polar residues. Residues 1318 to 1330 (TDEESDVTQEEER) are compositionally biased toward acidic residues. Positions 1334-1470 (YFEPVVPLPD…FDEAKTAQEK (137 aa)) constitute a RanBD1 2 domain. Positions 1581-1594 (NNSETSSVAQSGSE) are enriched in polar residues. Positions 1595-1618 (SKVEPKKCELSKNSDIEQSSDSKV) are enriched in basic and acidic residues. Residues 1703–1753 (QEVSAANVEHLKNVLLQFIFLKPGSERERLLPVINTMLQLSLEEKGKLAAV) form the GRIP domain.

The polypeptide is RanBP2-like and GRIP domain-containing protein 3 (RGPD3) (Homo sapiens (Human)).